We begin with the raw amino-acid sequence, 155 residues long: Endoribonuclease YbeY (155 aa).

3 residues coordinate Zn(2+): His-116, His-120, and His-126.

The protein belongs to the endoribonuclease YbeY family. Requires Zn(2+) as cofactor.

The protein resides in the cytoplasm. Functionally, single strand-specific metallo-endoribonuclease involved in late-stage 70S ribosome quality control and in maturation of the 3' terminus of the 16S rRNA. This is Endoribonuclease YbeY from Colwellia psychrerythraea (strain 34H / ATCC BAA-681) (Vibrio psychroerythus).